The sequence spans 296 residues: Sulfotransferase 6B1 (296 aa).

H112 functions as the Proton acceptor in the catalytic mechanism. 3'-phosphoadenylyl sulfate is bound by residues R134, S142, Y197, and 253–255; that span reads RKG.

The protein belongs to the sulfotransferase 1 family.

It localises to the cytoplasm. The protein resides in the cytosol. It carries out the reaction thyroxine + 3'-phosphoadenylyl sulfate = thyroxine sulfate + adenosine 3',5'-bisphosphate + H(+). With respect to regulation, strongly inhibited by the divalent metal cations Fe(2+), Hg(2+), Co(2+), Zn(2+), Cu(2+) and Cd(2+). Its function is as follows. Sulfotransferase that utilizes 3'-phospho-5'-adenylyl sulfate (PAPS) as sulfonate donor to catalyze the sulfate conjugation of a variety of xenobiotic and endogenous compounds, including dopamine, T3 (triiodo-L-thyronine), T4 (thyroxine), flavonoids, isoflavonoids, and other phenolic compounds. The chain is Sulfotransferase 6B1 from Danio rerio (Zebrafish).